The sequence spans 186 residues: Large ribosomal subunit protein uL5 (186 aa).

Belongs to the universal ribosomal protein uL5 family. In terms of assembly, part of the 50S ribosomal subunit; part of the 5S rRNA/L5/L18/L25 subcomplex. Contacts the 5S rRNA and the P site tRNA. Forms a bridge to the 30S subunit in the 70S ribosome.

In terms of biological role, this is one of the proteins that bind and probably mediate the attachment of the 5S RNA into the large ribosomal subunit, where it forms part of the central protuberance. In the 70S ribosome it contacts protein S13 of the 30S subunit (bridge B1b), connecting the 2 subunits; this bridge is implicated in subunit movement. Contacts the P site tRNA; the 5S rRNA and some of its associated proteins might help stabilize positioning of ribosome-bound tRNAs. In Porphyromonas gingivalis (strain ATCC 33277 / DSM 20709 / CIP 103683 / JCM 12257 / NCTC 11834 / 2561), this protein is Large ribosomal subunit protein uL5.